Reading from the N-terminus, the 613-residue chain is Methionine--tRNA ligase (613 aa).

A 'HIGH' region motif is present at residues 15-25 (PYANGPRHIGH). Residues Cys-147, Cys-150, Cys-160, and Cys-163 each contribute to the Zn(2+) site. Residues 351–355 (KFSSS) carry the 'KMSKS' region motif. An ATP-binding site is contributed by Ser-354.

It belongs to the class-I aminoacyl-tRNA synthetase family. MetG type 1 subfamily. Monomer. Zn(2+) is required as a cofactor.

It is found in the cytoplasm. It catalyses the reaction tRNA(Met) + L-methionine + ATP = L-methionyl-tRNA(Met) + AMP + diphosphate. Functionally, is required not only for elongation of protein synthesis but also for the initiation of all mRNA translation through initiator tRNA(fMet) aminoacylation. This chain is Methionine--tRNA ligase, found in Corynebacterium efficiens (strain DSM 44549 / YS-314 / AJ 12310 / JCM 11189 / NBRC 100395).